A 157-amino-acid chain; its full sequence is Galactose-specific lectin (157 aa).

The 146-residue stretch at 12-157 (SIVVGTWGAE…LDYIGFHLAL (146 aa)) folds into the Jacalin-type lectin domain. Residue asparagine 45 is glycosylated (N-linked (GlcNAc...) asparagine).

Belongs to the jacalin lectin family. In terms of assembly, tetramer of heterodimers of light and heavy chains which are non-covalently linked. Post-translationally, N-linked carbohydrates at Asn-45 can be of complex or paucimannose type.

Alpha-D-galactose-specific lectin. Has hemagglutinating activity towards human and rabbit erythrocytes. Is highly cytotoxic to human cells in vitro. This Morus indica (Mulberry) protein is Galactose-specific lectin.